The primary structure comprises 122 residues: Yop proteins translocation protein X (122 aa).

Residues 71 to 87 adopt a coiled-coil conformation; sequence HRAQDYRRELDTLQSLL.

In terms of assembly, interacts with YscY.

The protein localises to the secreted. Its function is as follows. Required for Yop secretion. This Yersinia enterocolitica serotype O:8 / biotype 1B (strain NCTC 13174 / 8081) protein is Yop proteins translocation protein X (yscX).